A 463-amino-acid polypeptide reads, in one-letter code: Probable glycosyltransferase 3 (463 aa).

The segment at 1-20 (MAVTGGGRPAARQQAARGKQ) is disordered. At 1-24 (MAVTGGGRPAARQQAARGKQMQRT) the chain is on the cytoplasmic side. Over residues 9-20 (PAARQQAARGKQ) the composition is skewed to low complexity. A helical; Signal-anchor for type II membrane protein membrane pass occupies residues 25-47 (FNNVKITLICGFITLLVLRGTVG). Over 48–463 (INLLTYGVGG…ALKMDAKIES (416 aa)) the chain is Lumenal. Positions 82–125 (EIRSDTDDDDDDEEEEPLGVDASTTTTTNSTTTTATAARRRSSN) are disordered. Acidic residues predominate over residues 87-99 (TDDDDDDEEEEPL). Residues 103–118 (ASTTTTTNSTTTTATA) show a composition bias toward low complexity. N-linked (GlcNAc...) asparagine glycans are attached at residues Asn110, Asn125, and Asn442.

It belongs to the glycosyltransferase 34 family.

It localises to the golgi apparatus membrane. Probable glycosyltransferase that may be involved in the biosynthesis of xyloglucan. The protein is Probable glycosyltransferase 3 of Oryza sativa subsp. indica (Rice).